Here is a 500-residue protein sequence, read N- to C-terminus: Probable cytosol aminopeptidase (500 aa).

2 residues coordinate Mn(2+): Lys-262 and Asp-267. Residue Lys-274 is part of the active site. The Mn(2+) site is built by Asp-285, Asp-344, and Glu-346. Arg-348 is an active-site residue.

This sequence belongs to the peptidase M17 family. It depends on Mn(2+) as a cofactor.

The protein resides in the cytoplasm. The catalysed reaction is Release of an N-terminal amino acid, Xaa-|-Yaa-, in which Xaa is preferably Leu, but may be other amino acids including Pro although not Arg or Lys, and Yaa may be Pro. Amino acid amides and methyl esters are also readily hydrolyzed, but rates on arylamides are exceedingly low.. It catalyses the reaction Release of an N-terminal amino acid, preferentially leucine, but not glutamic or aspartic acids.. Presumably involved in the processing and regular turnover of intracellular proteins. Catalyzes the removal of unsubstituted N-terminal amino acids from various peptides. This chain is Probable cytosol aminopeptidase, found in Ehrlichia ruminantium (strain Gardel).